A 45-amino-acid chain; its full sequence is Large ribosomal subunit protein bL34 (45 aa).

Residues 1–45 are disordered; the sequence is MTKRTFGGTSRKRKRVSGFRVRMRSHTGRRVVRTRRKRGRSRLTV. Basic residues predominate over residues 10–45; the sequence is SRKRKRVSGFRVRMRSHTGRRVVRTRRKRGRSRLTV.

The protein belongs to the bacterial ribosomal protein bL34 family.

This chain is Large ribosomal subunit protein bL34, found in Prochlorococcus marinus (strain NATL2A).